We begin with the raw amino-acid sequence, 304 residues long: Negative regulator of the PHO system (304 aa).

One can recognise a Protein kinase domain in the interval 7 to 297 (FKQLEKVGNG…AKDALNHPWF (291 aa)). Residues 13-21 (VGNGTYATV) and Lys36 each bind ATP. The active-site Proton acceptor is the Asp133.

Belongs to the protein kinase superfamily. CMGC Ser/Thr protein kinase family. CDC2/CDKX subfamily. In terms of assembly, interacts with a number of cyclins.

The catalysed reaction is L-seryl-[protein] + ATP = O-phospho-L-seryl-[protein] + ADP + H(+). It carries out the reaction L-threonyl-[protein] + ATP = O-phospho-L-threonyl-[protein] + ADP + H(+). Functionally, when phosphate concentrations are high it phosphorylates the PHO4 transcription factor thus establishing repression. This chain is Negative regulator of the PHO system (PHO85), found in Kluyveromyces lactis (strain ATCC 8585 / CBS 2359 / DSM 70799 / NBRC 1267 / NRRL Y-1140 / WM37) (Yeast).